The primary structure comprises 308 residues: MQVFQRKEDSSWGNSMPTTNSNIQGSESFSLTKDMIMSTTQLPAMKHSGLQLQNQDSTSSQSTEEESGGGEVASFGEYKRYGCSIVNNNLSGYIENLGKPIENYTKSITTSSMVSQDSVFPAPTSGQISWSLQCAETSHFNGFLAPEYASTPTALPHLEMMGLVSSRVPLPHHIQENEPIFVNAKQYHAILRRRKHRAKLEAQNKLIKCRKPYLHESRHLHALKRARGSGGRFLNTKKLQESSNSLCSSQMANGQNFSMSPHGGGSGIGSSSISPSSNSNCINMFQNPQFRFSGYPSTHHASALMSGT.

Positions Met1–Ser10 are enriched in basic and acidic residues. 2 disordered regions span residues Met1–Ser26 and Gly49–Glu71. Positions Ser11 to Ser26 are enriched in polar residues. Residues Phe181 to Asn204 carry the Subunit association domain (SAD) motif. Positions Lys211–Thr236 form a DNA-binding region, NFYA/HAP2-type. The interval Met251–Ile273 is disordered.

It belongs to the NFYA/HAP2 subunit family. As to quaternary structure, heterotrimeric transcription factor composed of three components, NF-YA, NF-YB and NF-YC. NF-YB and NF-YC must interact and dimerize for NF-YA association and DNA binding. As to expression, expressed in the whole plant, except roots. Present in etiolated seedlings.

It localises to the nucleus. In terms of biological role, stimulates the transcription of various genes by recognizing and binding to a CCAAT motif in promoters. Involved in the blue light (BL) and abscisic acid (ABA) signaling pathways. The sequence is that of Nuclear transcription factor Y subunit A-5 (NFYA5) from Arabidopsis thaliana (Mouse-ear cress).